Here is a 488-residue protein sequence, read N- to C-terminus: Facilitated trehalose transporter Tret1-2 homolog (488 aa).

At M1–Q28 the chain is on the cytoplasmic side. The helical transmembrane segment at V29 to T49 threads the bilayer. The Extracellular portion of the chain corresponds to S50 to S72. Residues W73–I93 traverse the membrane as a helical segment. Residues E94–T105 are Cytoplasmic-facing. The helical transmembrane segment at A106–L126 threads the bilayer. Residues C127 to R129 are Extracellular-facing. Residues F130–T150 traverse the membrane as a helical segment. Over L151–G160 the chain is Cytoplasmic. A helical membrane pass occupies residues L161–M181. N-linked (GlcNAc...) asparagine glycosylation occurs at N182. Over N182–S184 the chain is Extracellular. Residues M185–P205 traverse the membrane as a helical segment. Residues E206–P268 lie on the Cytoplasmic side of the membrane. The helical transmembrane segment at L269–F289 threads the bilayer. Topologically, residues Y290 to N305 are extracellular. Residues L306 to I326 form a helical membrane-spanning segment. The Cytoplasmic portion of the chain corresponds to D327–K332. Residues I333–F353 form a helical membrane-spanning segment. Topologically, residues Y354–C372 are extracellular. Residues F373 to G393 form a helical membrane-spanning segment. The Cytoplasmic portion of the chain corresponds to E394–G402. A helical transmembrane segment spans residues P403 to F423. Residues Q424–H433 lie on the Extracellular side of the membrane. A helical transmembrane segment spans residues G434 to V454. Over P455–M488 the chain is Cytoplasmic.

It belongs to the major facilitator superfamily. Sugar transporter (TC 2.A.1.1) family. Trehalose transporter subfamily.

It localises to the cell membrane. Functionally, fails to transport trehalose. The polypeptide is Facilitated trehalose transporter Tret1-2 homolog (Drosophila simulans (Fruit fly)).